A 777-amino-acid polypeptide reads, in one-letter code: Phosphoribosylformylglycinamidine synthase subunit PurL (777 aa).

H50 is an active-site residue. ATP-binding residues include Y53 and K92. E94 lines the Mg(2+) pocket. Substrate is bound by residues 95-98 (SHNH) and R117. The Proton acceptor role is filled by H96. A Mg(2+)-binding site is contributed by D118. Residue Q241 participates in substrate binding. D269 provides a ligand contact to Mg(2+). 313-315 (ESQ) lines the substrate pocket. D520 and G557 together coordinate ATP. N558 provides a ligand contact to Mg(2+). A substrate-binding site is contributed by S560.

The protein belongs to the FGAMS family. In terms of assembly, monomer. Part of the FGAM synthase complex composed of 1 PurL, 1 PurQ and 2 PurS subunits.

It is found in the cytoplasm. The catalysed reaction is N(2)-formyl-N(1)-(5-phospho-beta-D-ribosyl)glycinamide + L-glutamine + ATP + H2O = 2-formamido-N(1)-(5-O-phospho-beta-D-ribosyl)acetamidine + L-glutamate + ADP + phosphate + H(+). Its pathway is purine metabolism; IMP biosynthesis via de novo pathway; 5-amino-1-(5-phospho-D-ribosyl)imidazole from N(2)-formyl-N(1)-(5-phospho-D-ribosyl)glycinamide: step 1/2. Functionally, part of the phosphoribosylformylglycinamidine synthase complex involved in the purines biosynthetic pathway. Catalyzes the ATP-dependent conversion of formylglycinamide ribonucleotide (FGAR) and glutamine to yield formylglycinamidine ribonucleotide (FGAM) and glutamate. The FGAM synthase complex is composed of three subunits. PurQ produces an ammonia molecule by converting glutamine to glutamate. PurL transfers the ammonia molecule to FGAR to form FGAM in an ATP-dependent manner. PurS interacts with PurQ and PurL and is thought to assist in the transfer of the ammonia molecule from PurQ to PurL. The protein is Phosphoribosylformylglycinamidine synthase subunit PurL of Trichormus variabilis (strain ATCC 29413 / PCC 7937) (Anabaena variabilis).